The primary structure comprises 425 residues: Orexin/Hypocretin receptor type 1 (425 aa).

Residues 1 to 24 are disordered; sequence MEPSATPGAQMGVPPGSREPSPVP. The Extracellular segment spans residues 1 to 46; that stretch reads MEPSATPGAQMGVPPGSREPSPVPPDYEDEFLRYLWRDYLYPKQYE. Residues 26–41 form a required for response to orexin-A region; it reads DYEDEFLRYLWRDYLY. Residues 47–67 traverse the membrane as a helical segment; that stretch reads WVLIAAYVAVFVVALVGNTLV. Topologically, residues 68–82 are cytoplasmic; the sequence is CLAVWRNHHMRTVTN. The helical transmembrane segment at 83 to 105 threads the bilayer; it reads YFIVNLSLADVLVTAICLPASLL. Residues 106–119 lie on the Extracellular side of the membrane; sequence VDITESWLFGHALC. A disulfide bridge connects residues C119 and C202. A helical membrane pass occupies residues 120–140; the sequence is KVIPYLQAVSVSVAVLTLSFI. Residues 141 to 160 are Cytoplasmic-facing; that stretch reads ALDRWYAICHPLLFKSTARR. Residues 161–182 traverse the membrane as a helical segment; the sequence is ARGSILGIWAVSLAIMVPQAAV. Residues 183 to 213 lie on the Extracellular side of the membrane; that stretch reads MECSSVLPELANRTRLFSVCDERWADDLYPK. Residue N194 is glycosylated (N-linked (GlcNAc...) asparagine). Residues 214-235 traverse the membrane as a helical segment; it reads IYHSCFFIVTYLAPLGLMAMAY. Topologically, residues 236–298 are cytoplasmic; it reads FQIFRKLWGR…QMRARRKTAK (63 aa). Residues 299-321 form a helical membrane-spanning segment; that stretch reads MLMVVLLVFALCYLPISVLNVLK. N318 is a suvorexant binding site. Residues 322 to 336 are Extracellular-facing; the sequence is RVFGMFRQASDREAV. Residues 337–360 form a helical membrane-spanning segment; the sequence is YACFTFSHWLVYANSAANPIIYNF. Topologically, residues 361–425 are cytoplasmic; the sequence is LSGKFREQFK…VLTSVTTVLP (65 aa).

This sequence belongs to the G-protein coupled receptor 1 family.

It is found in the cell membrane. In terms of biological role, moderately selective excitatory receptor for orexin-A and, with a lower affinity, for orexin-B neuropeptide. Triggers an increase in cytoplasmic Ca(2+) levels in response to orexin-A binding. In Homo sapiens (Human), this protein is Orexin/Hypocretin receptor type 1.